Here is a 62-residue protein sequence, read N- to C-terminus: Small ribosomal subunit protein uS14 (62 aa).

The Zn(2+) site is built by Cys25, Cys28, Cys41, and Cys44.

Belongs to the universal ribosomal protein uS14 family. Zinc-binding uS14 subfamily. As to quaternary structure, part of the 30S ribosomal subunit. Contacts proteins S3 and S10. Zn(2+) is required as a cofactor.

In terms of biological role, binds 16S rRNA, required for the assembly of 30S particles and may also be responsible for determining the conformation of the 16S rRNA at the A site. In Hydrogenobaculum sp. (strain Y04AAS1), this protein is Small ribosomal subunit protein uS14.